Here is a 278-residue protein sequence, read N- to C-terminus: MDVRQSIHSAHAKTLDTQGLRNEFLVEEVFVADEYTMVYSHIDRIIVGGIMPITKTVSVGGEVGKQLGVSHFLERRELGVINIGGAGTITVDGQCYEIGHRDALYVGKGAKEVVFASIDTATPAKFYYNCAPAHTTYPTKKVTPDEVSPVTLGDNLTSNRRTINKYFVPDVLETCQLSMGLTELAPGNLWNTMPCHTHERRMEVYFYFNMDDDACVFHMMGQPQETRHIVMHNEQAVISPSWSIHSGVGTKAYTFIWGMVGENQVFDDMDHVAVKDLR.

Residues His196, His198, Glu203, and His245 each coordinate Zn(2+).

The protein belongs to the KduI family. In terms of assembly, homohexamer. Zn(2+) serves as cofactor.

It catalyses the reaction 5-dehydro-4-deoxy-D-glucuronate = 3-deoxy-D-glycero-2,5-hexodiulosonate. Its pathway is glycan metabolism; pectin degradation; 2-dehydro-3-deoxy-D-gluconate from pectin: step 4/5. Its function is as follows. Catalyzes the isomerization of 5-dehydro-4-deoxy-D-glucuronate to 3-deoxy-D-glycero-2,5-hexodiulosonate. This Escherichia coli O8 (strain IAI1) protein is 4-deoxy-L-threo-5-hexosulose-uronate ketol-isomerase.